The following is a 172-amino-acid chain: Nucleoside-triphosphatase THEP1 (172 aa).

Residues 11-18 (GKPGIGKT) and 101-108 (IILIDEIG) contribute to the ATP site.

This sequence belongs to the THEP1 NTPase family.

It carries out the reaction a ribonucleoside 5'-triphosphate + H2O = a ribonucleoside 5'-diphosphate + phosphate + H(+). Functionally, has nucleotide phosphatase activity towards ATP, GTP, CTP, TTP and UTP. May hydrolyze nucleoside diphosphates with lower efficiency. The protein is Nucleoside-triphosphatase THEP1 of Sulfolobus acidocaldarius (strain ATCC 33909 / DSM 639 / JCM 8929 / NBRC 15157 / NCIMB 11770).